Here is a 327-residue protein sequence, read N- to C-terminus: Opticin (327 aa).

Positions 1-19 are cleaved as a signal peptide; that stretch reads MKLPAFLSLLALVLLEAGT. 2 positions are modified to sulfotyrosine: Tyr61 and Tyr67. The 38-residue stretch at 111–148 folds into the LRRNT domain; the sequence is VLGSPNSHGLPTCLICVCLGSSVYCDDADLENIPPLPK. LRR repeat units follow at residues 149 to 170, 173 to 194, 197 to 218, 219 to 237, 243 to 263, 264 to 285, and 295 to 315; these read TTTY…DFKG, KLKR…ALRL, ALQD…PPAI, EVLD…QPEA, KLQF…PLPP, SLRS…AFCD, and WLED…PSAY. Cys284 and Cys317 are joined by a disulfide.

Belongs to the small leucine-rich proteoglycan (SLRP) family. SLRP class III subfamily. In terms of assembly, homodimer. Post-translationally, O-glycosylated. In terms of processing, proteolytically cleaved by MMP1, MMP2, MMP3, MMP7, MMP8, MMP9, ADAMTS4, and ADAMTS5. Proteolytically cleaved by MMP13. Sulfated on tyrosine residues. Ocular tissues, cartilage, ligament, skin, muscle and testes.

It is found in the secreted. The protein localises to the extracellular space. Its subcellular location is the extracellular matrix. Functionally, inhibits angiogenesis in the vitreous humor of the eye, and therefore represses neovascularization. Binds collagen fibrils. May be involved in collagen fiber organization via regulation of other members of the small leucine-rich repeat proteoglycan superfamily. In Canis lupus familiaris (Dog), this protein is Opticin (OPTC).